A 351-amino-acid chain; its full sequence is Formyl peptide receptor-related sequence 1 (351 aa).

The Extracellular segment spans residues 1-27 (METNYSIPLNGSDVVIYDSTISRVLWI). 2 N-linked (GlcNAc...) asparagine glycosylation sites follow: asparagine 4 and asparagine 10. Residues 28–50 (LSMVVVSITFFLGVLGNGLVIWV) traverse the membrane as a helical segment. The Cytoplasmic segment spans residues 51 to 61 (AGFRMPHTVTT). Residues 62–83 (IWYLNLALADFSFTATLPFLLV) traverse the membrane as a helical segment. Residues 84–100 (EMAMKEKWPFGWFLCKL) lie on the Extracellular side of the membrane. Residues cysteine 98 and cysteine 176 are joined by a disulfide bond. The chain crosses the membrane as a helical span at residues 101-121 (VHIAVDVNLFGSVFLIAVIAL). The Cytoplasmic segment spans residues 122–140 (DRCICVLHPVWAQNHRTVS). The helical transmembrane segment at 141–162 (LARNVVVGSWIFALILTLPLFL) threads the bilayer. Over 163–205 (FLTTVRDARGDVHCRLSFVSWGNSVEERLNTAITFVTTRGIIR) the chain is Extracellular. A helical membrane pass occupies residues 206–226 (FIVSFSLPMSFVAICYGLITT). Over 227 to 242 (KIHKKAFVNSSRPFRV) the chain is Cytoplasmic. Residues 243–266 (LTGVVASFFICWFPFQLVALLGTV) traverse the membrane as a helical segment. Over 267–286 (WLKEMQFSGSYKIIGRLVNP) the chain is Extracellular. The chain crosses the membrane as a helical span at residues 287–306 (TSSLAFFNSCLNPILYVFMG). The Cytoplasmic portion of the chain corresponds to 307-351 (QDFQERLIHSLSSRLQRALSEDSGHISDTRTNLASLPEDIEIKAI).

This sequence belongs to the G-protein coupled receptor 1 family. Expressed exclusively in vomeronasal neurons. Expressed in 0.6 % of a subset of sensory neurons located in the basal layer of the vomeronasal organ. Each neuron appears to express only one receptor gene. Expressed mostly in neutrophils, followed by spleen and lung and expressed at very low levels in heart and liver.

It is found in the cell membrane. In terms of biological role, low affinity receptor for N-formyl-methionyl peptides. Receptor for lipoxin A4. May have an olfactory function associated with the identification of pathogens or of pathogenic states. This Mus musculus (Mouse) protein is Formyl peptide receptor-related sequence 1 (Fpr-s1).